The primary structure comprises 584 residues: ETHYLENE INSENSITIVE 3-like 1 protein (584 aa).

Residues 41–74 (YTDDEMDVDELEKRMWRDKMRLKRLKEQQSKCKE) are a coiled coil. Over residues 67-80 (EQQSKCKEGVDGSK) the composition is skewed to basic and acidic residues. Disordered stretches follow at residues 67-93 (EQQS…RKKM) and 565-584 (EGMG…SIWF).

The protein belongs to the EIN3 family. Acts as a homodimer to bind the primary ethylene response element.

The protein localises to the nucleus. Functionally, probable transcription factor acting as a positive regulator in the ethylene response pathway. Could bind the primary ethylene response element present in the ETHYLENE-RESPONSE-FACTOR1 promoter. In Arabidopsis thaliana (Mouse-ear cress), this protein is ETHYLENE INSENSITIVE 3-like 1 protein (EIL1).